Here is a 111-residue protein sequence, read N- to C-terminus: Ribosome-binding factor A (111 aa).

Belongs to the RbfA family. As to quaternary structure, monomer. Binds 30S ribosomal subunits, but not 50S ribosomal subunits or 70S ribosomes.

The protein resides in the cytoplasm. Its function is as follows. One of several proteins that assist in the late maturation steps of the functional core of the 30S ribosomal subunit. Associates with free 30S ribosomal subunits (but not with 30S subunits that are part of 70S ribosomes or polysomes). Required for efficient processing of 16S rRNA. May interact with the 5'-terminal helix region of 16S rRNA. This chain is Ribosome-binding factor A, found in Helicobacter pylori (strain HPAG1).